A 402-amino-acid polypeptide reads, in one-letter code: p-cumate 2,3-dioxygenase system, ferredoxin--NAD(+) reductase component (402 aa).

A16, K51, V83, R131, and D275 together coordinate FAD.

It belongs to the FAD-dependent oxidoreductase family. The p-cumate 2,3-dioxygenase multicomponent enzyme system is composed of an electron transfer component and a dioxygenase component (iron sulfur protein (ISP)). The electron transfer component is composed of a ferredoxin reductase (CmtAa) and a ferredoxin (CmtAd), and the dioxygenase component is formed of a large alpha subunit (CmtAb) and a small beta subunit (CmtAc). The cofactor is FAD.

It catalyses the reaction 2 reduced [2Fe-2S]-[ferredoxin] + NAD(+) + H(+) = 2 oxidized [2Fe-2S]-[ferredoxin] + NADH. The protein operates within aromatic compound metabolism; p-cumate degradation; acetaldehyde and pyruvate from p-cumate. Functionally, component of the p-cumate 2,3-dioxygenase multicomponent enzyme system which catalyzes the incorporation of both atoms of molecular oxygen into p-cumate to form cis-2,3-dihydroxy-2,3-dihydro-p-cumate. Ferredoxin reductase catalyzes the transfer of electrons from NADH to ferredoxin (CmtAd). This is p-cumate 2,3-dioxygenase system, ferredoxin--NAD(+) reductase component from Pseudomonas putida (Arthrobacter siderocapsulatus).